The following is a 64-amino-acid chain: Translational regulator CsrA (64 aa).

Belongs to the CsrA/RsmA family. As to quaternary structure, homodimer; the beta-strands of each monomer intercalate to form a hydrophobic core, while the alpha-helices form wings that extend away from the core.

Its subcellular location is the cytoplasm. Its function is as follows. A key translational regulator that binds mRNA to regulate translation initiation and/or mRNA stability. Mediates global changes in gene expression, shifting from rapid growth to stress survival by linking envelope stress, the stringent response and the catabolite repression systems. Usually binds in the 5'-UTR; binding at or near the Shine-Dalgarno sequence prevents ribosome-binding, repressing translation, binding elsewhere in the 5'-UTR can activate translation and/or stabilize the mRNA. Its function is antagonized by small RNA(s). The chain is Translational regulator CsrA from Dichelobacter nodosus (strain VCS1703A).